A 229-amino-acid chain; its full sequence is ATP-dependent Clp protease proteolytic subunit 1 (229 aa).

Residue Ser129 is the Nucleophile of the active site. His154 is a catalytic residue.

Belongs to the peptidase S14 family. Fourteen ClpP subunits assemble into 2 heptameric rings which stack back to back to give a disk-like structure with a central cavity, resembling the structure of eukaryotic proteasomes.

The protein localises to the cytoplasm. The enzyme catalyses Hydrolysis of proteins to small peptides in the presence of ATP and magnesium. alpha-casein is the usual test substrate. In the absence of ATP, only oligopeptides shorter than five residues are hydrolyzed (such as succinyl-Leu-Tyr-|-NHMec, and Leu-Tyr-Leu-|-Tyr-Trp, in which cleavage of the -Tyr-|-Leu- and -Tyr-|-Trp bonds also occurs).. Its function is as follows. Cleaves peptides in various proteins in a process that requires ATP hydrolysis. Has a chymotrypsin-like activity. Plays a major role in the degradation of misfolded proteins. The polypeptide is ATP-dependent Clp protease proteolytic subunit 1 (Thermosynechococcus vestitus (strain NIES-2133 / IAM M-273 / BP-1)).